The chain runs to 178 residues: ATP synthase subunit b, chloroplastic (178 aa).

A helical transmembrane segment spans residues 34–50; sequence LAILTGGIFYLGSNALS.

Belongs to the ATPase B chain family. As to quaternary structure, F-type ATPases have 2 components, F(1) - the catalytic core - and F(0) - the membrane proton channel. F(1) has five subunits: alpha(3), beta(3), gamma(1), delta(1), epsilon(1). F(0) has four main subunits: a(1), b(1), b'(1) and c(10-14). The alpha and beta chains form an alternating ring which encloses part of the gamma chain. F(1) is attached to F(0) by a central stalk formed by the gamma and epsilon chains, while a peripheral stalk is formed by the delta, b and b' chains.

Its subcellular location is the plastid. The protein resides in the chloroplast thylakoid membrane. F(1)F(0) ATP synthase produces ATP from ADP in the presence of a proton or sodium gradient. F-type ATPases consist of two structural domains, F(1) containing the extramembraneous catalytic core and F(0) containing the membrane proton channel, linked together by a central stalk and a peripheral stalk. During catalysis, ATP synthesis in the catalytic domain of F(1) is coupled via a rotary mechanism of the central stalk subunits to proton translocation. Functionally, component of the F(0) channel, it forms part of the peripheral stalk, linking F(1) to F(0). The sequence is that of ATP synthase subunit b, chloroplastic from Ochrosphaera neapolitana.